A 148-amino-acid polypeptide reads, in one-letter code: Glutamate mutase sigma subunit 2 (148 aa).

Residues 1–134 (MRTVILGVIG…EALKADLGHR (134 aa)) enclose the B12-binding domain. Residues 11–15 (SDAHV), His-14, 59–61 (SSL), and 90–94 (NLAVG) contribute to the adenosylcob(III)alamin site. Basic and acidic residues predominate over residues 129 to 141 (ADLGHRSREEASS). A disordered region spans residues 129–148 (ADLGHRSREEASSEKVQLGS).

It belongs to the methylaspartate mutase GlmS subunit family. Heterotetramer composed of 2 epsilon subunits (GlmE) and 2 sigma subunits (GlmS). GlmE exists as a homodimer and GlmS as a monomer. Requires adenosylcob(III)alamin as cofactor.

The enzyme catalyses (2S,3S)-3-methyl-L-aspartate = L-glutamate. Its pathway is amino-acid degradation; L-glutamate degradation via mesaconate pathway; acetate and pyruvate from L-glutamate: step 1/4. In terms of biological role, catalyzes the carbon skeleton rearrangement of L-glutamate to L-threo-3-methylaspartate ((2S,3S)-3-methylaspartate). In Haloarcula marismortui (strain ATCC 43049 / DSM 3752 / JCM 8966 / VKM B-1809) (Halobacterium marismortui), this protein is Glutamate mutase sigma subunit 2.